The primary structure comprises 133 residues: Profilin-3 (133 aa).

The cysteines at positions 13 and 117 are disulfide-linked. The short motif at 83–99 (AVIRGKKGSGGITIKKT) is the Involved in PIP2 interaction element. A Phosphothreonine modification is found at Thr113.

It belongs to the profilin family. In terms of assembly, occurs in many kinds of cells as a complex with monomeric actin in a 1:1 ratio. Post-translationally, phosphorylated by MAP kinases.

The protein localises to the cytoplasm. It localises to the cytoskeleton. Functionally, binds to actin and affects the structure of the cytoskeleton. At high concentrations, profilin prevents the polymerization of actin, whereas it enhances it at low concentrations. The polypeptide is Profilin-3 (Corylus avellana (European hazel)).